A 239-amino-acid chain; its full sequence is Proteasome subunit beta type-6 (239 aa).

Alanine 2 carries the post-translational modification N-acetylalanine. Residues 2 to 34 (AATLLAARGAGPAPAWGPEAFTPDWESREVSTG) constitute a propeptide, removed in mature form. The Nucleophile role is filled by threonine 35. Threonine 69 carries the phosphothreonine modification.

This sequence belongs to the peptidase T1B family. In terms of assembly, the 26S proteasome consists of a 20S proteasome core and two 19S regulatory subunits. The 20S proteasome core is a barrel-shaped complex made of 28 subunits that are arranged in four stacked rings. The two outer rings are each formed by seven alpha subunits, and the two inner rings are formed by seven beta subunits. The proteolytic activity is exerted by three beta-subunits PSMB5, PSMB6 and PSMB7. (Microbial infection) Interacts with HIV-1 protein Tat.

The protein resides in the cytoplasm. Its subcellular location is the nucleus. The enzyme catalyses Cleavage of peptide bonds with very broad specificity.. In terms of biological role, component of the 20S core proteasome complex involved in the proteolytic degradation of most intracellular proteins. This complex plays numerous essential roles within the cell by associating with different regulatory particles. Associated with two 19S regulatory particles, forms the 26S proteasome and thus participates in the ATP-dependent degradation of ubiquitinated proteins. The 26S proteasome plays a key role in the maintenance of protein homeostasis by removing misfolded or damaged proteins that could impair cellular functions, and by removing proteins whose functions are no longer required. Associated with the PA200 or PA28, the 20S proteasome mediates ubiquitin-independent protein degradation. This type of proteolysis is required in several pathways including spermatogenesis (20S-PA200 complex) or generation of a subset of MHC class I-presented antigenic peptides (20S-PA28 complex). Within the 20S core complex, PSMB6 displays a peptidylglutamyl-hydrolizing activity also termed postacidic or caspase-like activity, meaning that the peptides bond hydrolysis occurs directly after acidic residues. The sequence is that of Proteasome subunit beta type-6 from Homo sapiens (Human).